We begin with the raw amino-acid sequence, 448 residues long: tRNA(Ile)-lysidine synthase (448 aa).

29 to 34 (SGGVDS) provides a ligand contact to ATP.

It belongs to the tRNA(Ile)-lysidine synthase family.

The protein localises to the cytoplasm. The enzyme catalyses cytidine(34) in tRNA(Ile2) + L-lysine + ATP = lysidine(34) in tRNA(Ile2) + AMP + diphosphate + H(+). Its function is as follows. Ligates lysine onto the cytidine present at position 34 of the AUA codon-specific tRNA(Ile) that contains the anticodon CAU, in an ATP-dependent manner. Cytidine is converted to lysidine, thus changing the amino acid specificity of the tRNA from methionine to isoleucine. This Azoarcus sp. (strain BH72) protein is tRNA(Ile)-lysidine synthase.